Here is a 90-residue protein sequence, read N- to C-terminus: Sec-independent protein translocase protein TatAo (90 aa).

The chain crosses the membrane as a helical span at residues 8 to 28 (FPGLPGGPELLIVLLIVVLLF). Residues 39–90 (SSGQAMGEFRRGREEIEEELKKGAEGGDDEGENGDEAEADDADATETEAESR) are disordered. Positions 46 to 63 (EFRRGREEIEEELKKGAE) are enriched in basic and acidic residues. Over residues 64-90 (GGDDEGENGDEAEADDADATETEAESR) the composition is skewed to acidic residues.

Belongs to the TatA/E family. As to quaternary structure, forms a complex with TatC. Cytoplasmic and membrane-bound TatA form high-molecular-weight complexes.

The protein localises to the cell membrane. The protein resides in the cytoplasm. In terms of biological role, part of the twin-arginine translocation (Tat) system that transports large folded proteins containing a characteristic twin-arginine motif in their signal peptide across membranes. TatA could form the protein-conducting channel of the Tat system. This is Sec-independent protein translocase protein TatAo from Haloferax volcanii (strain ATCC 29605 / DSM 3757 / JCM 8879 / NBRC 14742 / NCIMB 2012 / VKM B-1768 / DS2) (Halobacterium volcanii).